Here is a 104-residue protein sequence, read N- to C-terminus: Evasin P1174 (104 aa).

Positions 1–27 (LKTFCLFLQIAVFIALGIQIFLCGTDA) are cleaved as a signal peptide. 3 disulfides stabilise this stretch: C40/C59, C44/C61, and C55/C72. N-linked (GlcNAc...) asparagine glycans are attached at residues N43, N49, and N58. The segment at 85–104 (KPTSEEIADASPRPKETNSH) is disordered.

The protein localises to the secreted. Salivary chemokine-binding protein which binds to host chemokines CXCL1 and CXCL8. The protein is Evasin P1174 of Ixodes ricinus (Common tick).